We begin with the raw amino-acid sequence, 37 residues long: Large ribosomal subunit protein bL36B (37 aa).

Belongs to the bacterial ribosomal protein bL36 family.

In Paenarthrobacter aurescens (strain TC1), this protein is Large ribosomal subunit protein bL36B.